A 308-amino-acid chain; its full sequence is Spermidine synthase 2 (308 aa).

In terms of domain architecture, PABS spans 17-254 (PGWFSEISPL…GVIGFMLCST (238 aa)). Q48 lines the S-adenosyl 3-(methylsulfanyl)propylamine pocket. Residue Y78 coordinates putrescine. S-adenosyl 3-(methylsulfanyl)propylamine is bound by residues Q79, D103, E123, 154–155 (DG), and D173. D173 serves as the catalytic Proton acceptor. Putrescine-binding positions include 173-176 (DSSD) and Y242.

This sequence belongs to the spermidine/spermine synthase family.

The enzyme catalyses S-adenosyl 3-(methylsulfanyl)propylamine + putrescine = S-methyl-5'-thioadenosine + spermidine + H(+). Its pathway is amine and polyamine biosynthesis; spermidine biosynthesis; spermidine from putrescine: step 1/1. The chain is Spermidine synthase 2 from Hyoscyamus niger (Black henbane).